Consider the following 350-residue polypeptide: Probable V-type proton ATPase subunit d 2 (350 aa).

The protein belongs to the V-ATPase V0D/AC39 subunit family. V-ATPase is a heteromultimeric enzyme made up of two complexes: the ATP-hydrolytic V1 complex and the proton translocation V0 complex. The V1 complex consists of three catalytic AB heterodimers that form a heterohexamer, three peripheral stalks each consisting of EG heterodimers, one central rotor including subunits D and F, and the regulatory subunits C and H. The proton translocation complex V0 consists of the proton transport subunit a, a ring of proteolipid subunits c9c'', rotary subunit d, subunits e and f, and the accessory subunits VhaAC45 and ATP6AP2.

Subunit of the V0 complex of vacuolar(H+)-ATPase (V-ATPase), a multisubunit enzyme composed of a peripheral complex (V1) that hydrolyzes ATP and a membrane integral complex (V0) that translocates protons. V-ATPase is responsible for acidifying and maintaining the pH of intracellular compartments and in some cell types, is targeted to the plasma membrane, where it is responsible for acidifying the extracellular environment. May play a role in coupling of proton transport and ATP hydrolysis. This is Probable V-type proton ATPase subunit d 2 (VhaAC39-2) from Drosophila melanogaster (Fruit fly).